We begin with the raw amino-acid sequence, 244 residues long: MHVPASLQQSSSSSSSCTEEENKHHMGIDVIIKVTKQDQTPTNDKICQSVTEITESESDPDPEVESEDDSTSVEDVDPPTTYYSIIGGGLRMNFGFTKCPQIKSISESADGNTVNARLSSVSPGQGKDSPAITREEALAMIKDCEVSIDIRCSEEEKDSDIKTHPVLGSNISHKKVSYEDIIGSTIVDTKCVKNLEFSVRIGDMCKESSELEVKDGFKYVDGSASEGATDDTSLIDSTKLKACV.

Residues 1-79 are disordered; that stretch reads MHVPASLQQS…STSVEDVDPP (79 aa). Residues 37–53 show a composition bias toward polar residues; the sequence is QDQTPTNDKICQSVTEI. A compositionally biased stretch (acidic residues) spans 54–77; it reads TESESDPDPEVESEDDSTSVEDVD.

The protein belongs to the orthopoxvirus OPG001 family.

The protein localises to the host cytoplasm. In terms of biological role, the protein is truncated in this vaccinal strain and presumably inactive, because the lack of signal peptide prevents the protein of being secreted. In the other strains inhibits host immune defense by binding to host chemokines. Binds host CC chemokines (beta chemokines) such as RANTES with high affinity, but not CXC or C chemokines (alpha and gamma chemokines). The protein is Inactive chemokine-binding protein (OPG001) of Vaccinia virus (strain Copenhagen) (VACV).